Reading from the N-terminus, the 165-residue chain is Large ribosomal subunit protein uL10 (165 aa).

The protein belongs to the universal ribosomal protein uL10 family. Part of the ribosomal stalk of the 50S ribosomal subunit. The N-terminus interacts with L11 and the large rRNA to form the base of the stalk. The C-terminus forms an elongated spine to which L12 dimers bind in a sequential fashion forming a multimeric L10(L12)X complex.

Functionally, forms part of the ribosomal stalk, playing a central role in the interaction of the ribosome with GTP-bound translation factors. The sequence is that of Large ribosomal subunit protein uL10 from Sodalis glossinidius (strain morsitans).